Consider the following 1033-residue polypeptide: Probable beta-glucosidase E (1033 aa).

The disordered stretch occupies residues 1–71 (MAPPDSTHGG…RSGSYKLRPV (71 aa)). Topologically, residues 1–161 (MAPPDSTHGG…PVKYARIWWR (161 aa)) are cytoplasmic. 2 stretches are compositionally biased toward basic and acidic residues: residues 11 to 20 (SFRDHLKTND) and 59 to 71 (DLERSGSYKLRPV). A helical; Signal-anchor for type II membrane protein transmembrane segment spans residues 162-182 (TLLAVVVTLVVVVWGFLSFAV). The Extracellular segment spans residues 183–1033 (SHREEPTVWP…SRDLPLMGEY (851 aa)). N-linked (GlcNAc...) asparagine glycans are attached at residues asparagine 224, asparagine 232, and asparagine 418. Aspartate 446 is an active-site residue. 6 N-linked (GlcNAc...) asparagine glycosylation sites follow: asparagine 489, asparagine 528, asparagine 593, asparagine 909, asparagine 918, and asparagine 976.

This sequence belongs to the glycosyl hydrolase 3 family.

The protein resides in the cell membrane. It carries out the reaction Hydrolysis of terminal, non-reducing beta-D-glucosyl residues with release of beta-D-glucose.. It participates in glycan metabolism; cellulose degradation. Functionally, beta-glucosidases are one of a number of cellulolytic enzymes involved in the degradation of cellulosic biomass. Catalyzes the last step releasing glucose from the inhibitory cellobiose. This Aspergillus fumigatus (strain CBS 144.89 / FGSC A1163 / CEA10) (Neosartorya fumigata) protein is Probable beta-glucosidase E (bglE).